The primary structure comprises 723 residues: Catalase-peroxidase (723 aa).

The tryptophyl-tyrosyl-methioninium (Trp-Tyr) (with M-251) cross-link spans 97-225 (WHAAGSYRVT…LAAVQMGLIY (129 aa)). The active-site Proton acceptor is the histidine 98. The segment at residues 225–251 (YVNPEGVNGKSDPLATAAQMRETFARM) is a cross-link (tryptophyl-tyrosyl-methioninium (Tyr-Met) (with W-97)). Residue histidine 266 participates in heme b binding.

The protein belongs to the peroxidase family. Peroxidase/catalase subfamily. In terms of assembly, homodimer or homotetramer. Heme b is required as a cofactor. Formation of the three residue Trp-Tyr-Met cross-link is important for the catalase, but not the peroxidase activity of the enzyme.

It carries out the reaction H2O2 + AH2 = A + 2 H2O. It catalyses the reaction 2 H2O2 = O2 + 2 H2O. Functionally, bifunctional enzyme with both catalase and broad-spectrum peroxidase activity. The chain is Catalase-peroxidase from Agrobacterium fabrum (strain C58 / ATCC 33970) (Agrobacterium tumefaciens (strain C58)).